Here is a 377-residue protein sequence, read N- to C-terminus: RIB43A-like with coiled-coils protein 2 (377 aa).

Positions 188–238 form a coiled coil; sequence ELKFDEAARDLQRLEITTRKAVCAAVKEFNKKQVVELAERKRQVKQQEQED. The segment at 355-377 is disordered; it reads QLDAAPSSQPTEDYFSQFNTRSR. The span at 360–377 shows a compositional bias: polar residues; sequence PSSQPTEDYFSQFNTRSR.

Belongs to the RIB43A family. Microtubule inner protein component of sperm flagellar doublet microtubules.

The protein resides in the cytoplasm. It localises to the cytoskeleton. It is found in the cilium axoneme. Its subcellular location is the flagellum axoneme. Functionally, microtubule inner protein (MIP) part of the dynein-decorated doublet microtubules (DMTs) in cilia axoneme, which is required for motile cilia beating. The chain is RIB43A-like with coiled-coils protein 2 from Rattus norvegicus (Rat).